The chain runs to 244 residues: Ribonuclease HII (244 aa).

An RNase H type-2 domain is found at 23–236 (KIILGLDEAG…SKKLLKEFEE (214 aa)). A divalent metal cation contacts are provided by D29, E30, and D130.

The protein belongs to the RNase HII family. Requires Mn(2+) as cofactor. Mg(2+) serves as cofactor.

The protein resides in the cytoplasm. The catalysed reaction is Endonucleolytic cleavage to 5'-phosphomonoester.. Endonuclease that specifically degrades the RNA of RNA-DNA hybrids. The chain is Ribonuclease HII from Methanococcus vannielii (strain ATCC 35089 / DSM 1224 / JCM 13029 / OCM 148 / SB).